We begin with the raw amino-acid sequence, 462 residues long: Argininosuccinate lyase (462 aa).

Belongs to the lyase 1 family. Argininosuccinate lyase subfamily.

The protein resides in the cytoplasm. The enzyme catalyses 2-(N(omega)-L-arginino)succinate = fumarate + L-arginine. The protein operates within amino-acid biosynthesis; L-arginine biosynthesis; L-arginine from L-ornithine and carbamoyl phosphate: step 3/3. This chain is Argininosuccinate lyase, found in Pelagibacter ubique (strain HTCC1062).